A 406-amino-acid chain; its full sequence is Glucose-6-phosphate isomerase (406 aa).

The active-site Proton donor is the Glu-259. Residues His-284 and Lys-397 contribute to the active site.

Belongs to the GPI family.

It localises to the cytoplasm. The enzyme catalyses alpha-D-glucose 6-phosphate = beta-D-fructose 6-phosphate. It functions in the pathway carbohydrate biosynthesis; gluconeogenesis. It participates in carbohydrate degradation; glycolysis; D-glyceraldehyde 3-phosphate and glycerone phosphate from D-glucose: step 2/4. Its function is as follows. Catalyzes the reversible isomerization of glucose-6-phosphate to fructose-6-phosphate. This is Glucose-6-phosphate isomerase from Campylobacter jejuni subsp. jejuni serotype O:2 (strain ATCC 700819 / NCTC 11168).